The sequence spans 55 residues: Small integral membrane protein 27 (55 aa).

The chain crosses the membrane as a helical span at residues 11-31 (WIYSVLLLAIVLISWGCIIYA).

It is found in the membrane. This chain is Small integral membrane protein 27, found in Homo sapiens (Human).